The sequence spans 453 residues: Adenosylmethionine-8-amino-7-oxononanoate aminotransferase (453 aa).

Pyridoxal 5'-phosphate is bound at residue 118-119; that stretch reads GS. Tyr-151 serves as a coordination point for substrate. Asp-258 lines the pyridoxal 5'-phosphate pocket. Lys-287, Gly-322, and Arg-417 together coordinate substrate. An N6-(pyridoxal phosphate)lysine modification is found at Lys-287.

This sequence belongs to the class-III pyridoxal-phosphate-dependent aminotransferase family. BioA subfamily. Homodimer. Requires pyridoxal 5'-phosphate as cofactor.

Its subcellular location is the cytoplasm. The catalysed reaction is (8S)-8-amino-7-oxononanoate + S-adenosyl-L-methionine = S-adenosyl-4-methylsulfanyl-2-oxobutanoate + (7R,8S)-7,8-diammoniononanoate. The protein operates within cofactor biosynthesis; biotin biosynthesis; 7,8-diaminononanoate from 8-amino-7-oxononanoate (SAM route): step 1/1. Its function is as follows. Catalyzes the transfer of the alpha-amino group from S-adenosyl-L-methionine (SAM) to 7-keto-8-aminopelargonic acid (KAPA) to form 7,8-diaminopelargonic acid (DAPA). It is the only aminotransferase known to utilize SAM as an amino donor. In Geobacter sulfurreducens (strain ATCC 51573 / DSM 12127 / PCA), this protein is Adenosylmethionine-8-amino-7-oxononanoate aminotransferase.